A 289-amino-acid polypeptide reads, in one-letter code: 4-hydroxy-tetrahydrodipicolinate synthase (289 aa).

Threonine 43 contributes to the pyruvate binding site. Residue tyrosine 131 is the Proton donor/acceptor of the active site. The active-site Schiff-base intermediate with substrate is lysine 160. Valine 200 lines the pyruvate pocket.

Belongs to the DapA family. As to quaternary structure, homotetramer; dimer of dimers.

Its subcellular location is the cytoplasm. The catalysed reaction is L-aspartate 4-semialdehyde + pyruvate = (2S,4S)-4-hydroxy-2,3,4,5-tetrahydrodipicolinate + H2O + H(+). The protein operates within amino-acid biosynthesis; L-lysine biosynthesis via DAP pathway; (S)-tetrahydrodipicolinate from L-aspartate: step 3/4. Catalyzes the condensation of (S)-aspartate-beta-semialdehyde [(S)-ASA] and pyruvate to 4-hydroxy-tetrahydrodipicolinate (HTPA). The polypeptide is 4-hydroxy-tetrahydrodipicolinate synthase (Methanococcus maripaludis (strain C5 / ATCC BAA-1333)).